We begin with the raw amino-acid sequence, 216 residues long: MKSAIMAVASAAPGLRGPSAFNGAALTTSAKSSSAMKMSFESEIGAQAPLGFWDPLGLLEDADQDAFERLRYVEVKLGRIAMLAIAGHLTQQNARLPGMLSNSANLSFADMPNGVAALSKIPPGGLAQIFGFIGFLELAVMKNVEGSFPGDFTLGGNPFASSWDAMSAETQASKRAIELNNGRAAQMGILALMVHEELNNKPYVINDLLGASYNFN.

The N-terminal 38 residues, 1–38 (MKSAIMAVASAAPGLRGPSAFNGAALTTSAKSSSAMKM), are a transit peptide targeting the chloroplast. Transmembrane regions (helical) follow at residues 80–100 (IAMLAIAGHLTQQNARLPGML), 121–141 (IPPGGLAQIFGFIGFLELAVM), and 182–202 (GRAAQMGILALMVHEELNNKP).

The protein belongs to the fucoxanthin chlorophyll protein family. In terms of assembly, the LHC complex of chromophytic algae is composed of fucoxanthin, chlorophyll A and C bound non-covalently by fucoxanthin chlorophyll proteins (FCPs). The ratio of pigments in this LHC is; fucoxanthin: chlorophyll C: chlorophyll A; (0.6-1): (0.1-0.3): (1).

Its subcellular location is the plastid. It localises to the chloroplast thylakoid membrane. The light-harvesting complex (LHC) functions as a light receptor, it captures and delivers excitation energy to photosystems with which it is closely associated. Energy is transferred from the carotenoid and chlorophyll C (or B) to chlorophyll A and the photosynthetic reaction centers where it is used to synthesize ATP and reducing power. The polypeptide is Fucoxanthin-chlorophyll a-c binding protein C, chloroplastic (FCPC) (Macrocystis pyrifera (Giant kelp)).